The sequence spans 560 residues: Terminal uridylyltransferase Tailor (560 aa).

Residues 169-197 (EQHPKPNPNNQPVQPHPTHQTKQEKKQAQ) form a disordered region. Residues 176-188 (PNNQPVQPHPTHQ) are compositionally biased toward low complexity. 2 residues coordinate Mg(2+): D278 and D280. A PAP-associated domain is found at 455–522 (LRNFFAYFAK…VVQDPIQLNH (68 aa)).

Mg(2+) is required as a cofactor.

The protein localises to the cytoplasm. The enzyme catalyses RNA(n) + UTP = RNA(n)-3'-uridine ribonucleotide + diphosphate. Its function is as follows. Uridylyltransferase which mediates terminal uridylation of miRNAs, leading to their degradation. Has high specificity for splicing-derived miRNAs (mirtrons) and other miRNA substrates containing a 3'-G terminal nucleotide. Appears to be a major suppressor of mirtron biogenesis. The protein is Terminal uridylyltransferase Tailor of Drosophila melanogaster (Fruit fly).